We begin with the raw amino-acid sequence, 358 residues long: Gibberellin receptor GID1B (358 aa).

At Ala-2 the chain carries N-acetylalanine. Residues 113 to 115 (HGG) carry the Involved in the stabilization of the negatively charged intermediate by the formation of the oxyanion hole motif. Residues 115-116 (GS), Tyr-127, and Ser-191 contribute to the gibberellin A4 site. Positions 116, 127, 191, and 238 each coordinate gibberellin A3. Ser-191 is a catalytic residue. Residue Asp-289 is part of the active site. Gly-320 lines the gibberellin A4 pocket. Residue Gly-320 participates in gibberellin A3 binding.

This sequence belongs to the 'GDXG' lipolytic enzyme family. In terms of assembly, interacts with the DELLA proteins GAI, RGA, RGL1, RGL2 and RGL3 in a GA-dependent manner. In terms of tissue distribution, widely expressed.

The protein resides in the nucleus. Functions as a soluble gibberellin (GA) receptor. GA is an essential hormone that regulates growth and development in plants. Binds with high affinity the biologically active gibberellin GA4, but has no affinity for the biologically inactive GAs. In response to GA, interacts with specific DELLA proteins, known as repressors of GA-induced growth, and targets them for degradation via proteasome. Seems to be required for GA signaling that controls root growth, seed germination and flower development. May function as a dominant GA receptor at low GA concentrations in germination. Partially redundant with GID1A and GID1C. In Arabidopsis thaliana (Mouse-ear cress), this protein is Gibberellin receptor GID1B (GID1B).